A 647-amino-acid polypeptide reads, in one-letter code: Carotenoid phi-ring synthase (647 aa).

FAD-binding positions include A67, 86 to 87, K94, and Y120; that span reads EA. The Rieske domain maps to 322 to 416; the sequence is VASIPKREVP…VREAGEMLVI (95 aa). The [2Fe-2S] cluster site is built by C362, H364, C380, and H383. FAD is bound by residues D601 and M612.

This sequence belongs to the carotenoid/retinoid oxidoreductase family. The cofactor is FAD. Requires [2Fe-2S] cluster as cofactor.

It carries out the reaction a carotenoid beta-end derivative + 2 A = a carotenoid phi-end derivative + 2 AH2. Its pathway is carotenoid biosynthesis. In terms of biological role, involved in the biosynthesis of chlorobactene, a carotenoid with aromatic end group. Catalyzes the introduction of two additional double bonds into the ionone ring of gamma-carotene to produce chlorobactene. The reaction includes an intramolecular methyl transfer from position C1 to position C2 of the ring. This Chlorobaculum tepidum (strain ATCC 49652 / DSM 12025 / NBRC 103806 / TLS) (Chlorobium tepidum) protein is Carotenoid phi-ring synthase.